A 277-amino-acid polypeptide reads, in one-letter code: Shikimate dehydrogenase (NADP(+)) (277 aa).

Residues S15–S17 and T62 contribute to the shikimate site. Residue K66 is the Proton acceptor of the active site. Shikimate is bound by residues N87 and D102. Residues G127–A131, N151–K156, and I219 each bind NADP(+). Y221 is a shikimate binding site. Position 242 (G242) interacts with NADP(+).

The protein belongs to the shikimate dehydrogenase family. In terms of assembly, homodimer.

It carries out the reaction shikimate + NADP(+) = 3-dehydroshikimate + NADPH + H(+). It participates in metabolic intermediate biosynthesis; chorismate biosynthesis; chorismate from D-erythrose 4-phosphate and phosphoenolpyruvate: step 4/7. Involved in the biosynthesis of the chorismate, which leads to the biosynthesis of aromatic amino acids. Catalyzes the reversible NADPH linked reduction of 3-dehydroshikimate (DHSA) to yield shikimate (SA). This is Shikimate dehydrogenase (NADP(+)) from Bacillus cereus (strain ATCC 10987 / NRS 248).